The primary structure comprises 158 residues: Anaerobic ribonucleoside-triphosphate reductase-activating protein (158 aa).

Positions 26, 30, and 33 each coordinate [4Fe-4S] cluster. S-adenosyl-L-methionine contacts are provided by residues 32-34 and Gly-74; that span reads GCY.

The protein belongs to the organic radical-activating enzymes family. As to quaternary structure, forms a tetramer composed of two NrdD and two NrdG subunits. [4Fe-4S] cluster serves as cofactor.

It localises to the cytoplasm. It catalyses the reaction glycyl-[protein] + reduced [flavodoxin] + S-adenosyl-L-methionine = glycin-2-yl radical-[protein] + semiquinone [flavodoxin] + 5'-deoxyadenosine + L-methionine + H(+). Its function is as follows. Activation of anaerobic ribonucleoside-triphosphate reductase under anaerobic conditions by generation of an organic free radical, using S-adenosylmethionine and reduced flavodoxin as cosubstrates to produce 5'-deoxy-adenosine. The sequence is that of Anaerobic ribonucleoside-triphosphate reductase-activating protein (nrdG) from Pasteurella multocida (strain Pm70).